We begin with the raw amino-acid sequence, 295 residues long: Indole-3-glycerol phosphate synthase (295 aa).

Belongs to the TrpC family.

The enzyme catalyses 1-(2-carboxyphenylamino)-1-deoxy-D-ribulose 5-phosphate + H(+) = (1S,2R)-1-C-(indol-3-yl)glycerol 3-phosphate + CO2 + H2O. Its pathway is amino-acid biosynthesis; L-tryptophan biosynthesis; L-tryptophan from chorismate: step 4/5. The chain is Indole-3-glycerol phosphate synthase from Prochlorococcus marinus (strain MIT 9215).